The chain runs to 239 residues: Probable transcriptional regulatory protein BC_0539 (239 aa).

Belongs to the TACO1 family. YeeN subfamily.

It localises to the cytoplasm. The sequence is that of Probable transcriptional regulatory protein BC_0539 from Bacillus cereus (strain ATCC 14579 / DSM 31 / CCUG 7414 / JCM 2152 / NBRC 15305 / NCIMB 9373 / NCTC 2599 / NRRL B-3711).